A 447-amino-acid polypeptide reads, in one-letter code: tRNA modification GTPase MnmE (447 aa).

(6S)-5-formyl-5,6,7,8-tetrahydrofolate contacts are provided by Arg22, Glu81, and Lys121. A TrmE-type G domain is found at Gly217–Glu373. Asn227 contacts K(+). GTP is bound by residues Asn227 to Ser232, Ser246 to Thr252, and Asp271 to Gly274. Ser231 serves as a coordination point for Mg(2+). Ser246, Ile248, and Thr251 together coordinate K(+). Position 252 (Thr252) interacts with Mg(2+). Lys447 provides a ligand contact to (6S)-5-formyl-5,6,7,8-tetrahydrofolate.

The protein belongs to the TRAFAC class TrmE-Era-EngA-EngB-Septin-like GTPase superfamily. TrmE GTPase family. In terms of assembly, homodimer. Heterotetramer of two MnmE and two MnmG subunits. K(+) serves as cofactor.

Its subcellular location is the cytoplasm. In terms of biological role, exhibits a very high intrinsic GTPase hydrolysis rate. Involved in the addition of a carboxymethylaminomethyl (cmnm) group at the wobble position (U34) of certain tRNAs, forming tRNA-cmnm(5)s(2)U34. The protein is tRNA modification GTPase MnmE of Orientia tsutsugamushi (strain Boryong) (Rickettsia tsutsugamushi).